Reading from the N-terminus, the 176-residue chain is MVKYSQEPDNITKSCKARGADLRVHFKNTRETAHAIRKLPLNKAKRYLEDVIAHKQAIPFTRFCRGVGRTAQAKNRHSNGQGRWPAKSAQFVLDLLKNAESNAEVKGLDVDALFISHIQVNQAAKQRRRTYRAHGRINPYMSNPCHIELILSEKEEPVKKEPETQLAAKSKKGASS.

A compositionally biased stretch (basic and acidic residues) spans 154–163 (KEEPVKKEPE). Positions 154-176 (KEEPVKKEPETQLAAKSKKGASS) are disordered.

The protein belongs to the universal ribosomal protein uL22 family.

This chain is Large ribosomal subunit protein uL22z (RPL17A), found in Arabidopsis thaliana (Mouse-ear cress).